We begin with the raw amino-acid sequence, 211 residues long: Transcriptional regulator GfcR (211 aa).

It belongs to the purine/pyrimidine phosphoribosyltransferase family. GfcR subfamily.

This Methanocaldococcus jannaschii (strain ATCC 43067 / DSM 2661 / JAL-1 / JCM 10045 / NBRC 100440) (Methanococcus jannaschii) protein is Transcriptional regulator GfcR.